A 356-amino-acid chain; its full sequence is Phospho-N-acetylmuramoyl-pentapeptide-transferase (356 aa).

Transmembrane regions (helical) follow at residues 4 to 24 (ILLA…WFIH), 53 to 73 (GGAV…LVTW), 76 to 96 (PSIS…IGFL), 116 to 136 (LLGQ…FPDV), 152 to 172 (ISWL…LIAG), 186 to 206 (LATG…IWQF), 228 to 248 (DIAV…WWNA), 253 to 273 (IFLG…MAVV), 278 to 298 (LLLV…MLQV), and 333 to 353 (FWII…AEWV).

It belongs to the glycosyltransferase 4 family. MraY subfamily. The cofactor is Mg(2+).

It localises to the cell membrane. The enzyme catalyses UDP-N-acetyl-alpha-D-muramoyl-L-alanyl-gamma-D-glutamyl-meso-2,6-diaminopimeloyl-D-alanyl-D-alanine + di-trans,octa-cis-undecaprenyl phosphate = di-trans,octa-cis-undecaprenyl diphospho-N-acetyl-alpha-D-muramoyl-L-alanyl-D-glutamyl-meso-2,6-diaminopimeloyl-D-alanyl-D-alanine + UMP. The protein operates within cell wall biogenesis; peptidoglycan biosynthesis. In terms of biological role, catalyzes the initial step of the lipid cycle reactions in the biosynthesis of the cell wall peptidoglycan: transfers peptidoglycan precursor phospho-MurNAc-pentapeptide from UDP-MurNAc-pentapeptide onto the lipid carrier undecaprenyl phosphate, yielding undecaprenyl-pyrophosphoryl-MurNAc-pentapeptide, known as lipid I. This is Phospho-N-acetylmuramoyl-pentapeptide-transferase from Cutibacterium acnes (strain DSM 16379 / KPA171202) (Propionibacterium acnes).